The following is a 477-amino-acid chain: Ribulose bisphosphate carboxylase large chain (477 aa).

Residues 1-2 (MS) constitute a propeptide that is removed on maturation. Proline 3 carries the N-acetylproline modification. Positions 123 and 173 each coordinate substrate. Lysine 175 acts as the Proton acceptor in catalysis. Lysine 177 is a binding site for substrate. The Mg(2+) site is built by lysine 201, aspartate 203, and glutamate 204. Lysine 201 is modified (N6-carboxylysine). The Proton acceptor role is filled by histidine 294. Residues arginine 295, histidine 327, and serine 379 each contribute to the substrate site.

It belongs to the RuBisCO large chain family. Type I subfamily. Heterohexadecamer of 8 large chains and 8 small chains; disulfide-linked. The disulfide link is formed within the large subunit homodimers. It depends on Mg(2+) as a cofactor. The disulfide bond which can form in the large chain dimeric partners within the hexadecamer appears to be associated with oxidative stress and protein turnover.

It localises to the plastid. The protein resides in the chloroplast. The enzyme catalyses 2 (2R)-3-phosphoglycerate + 2 H(+) = D-ribulose 1,5-bisphosphate + CO2 + H2O. It catalyses the reaction D-ribulose 1,5-bisphosphate + O2 = 2-phosphoglycolate + (2R)-3-phosphoglycerate + 2 H(+). Its function is as follows. RuBisCO catalyzes two reactions: the carboxylation of D-ribulose 1,5-bisphosphate, the primary event in carbon dioxide fixation, as well as the oxidative fragmentation of the pentose substrate in the photorespiration process. Both reactions occur simultaneously and in competition at the same active site. The polypeptide is Ribulose bisphosphate carboxylase large chain (Avena sativa (Oat)).